A 369-amino-acid polypeptide reads, in one-letter code: Phospho-N-acetylmuramoyl-pentapeptide-transferase (369 aa).

The next 10 helical transmembrane spans lie at 2-22 (IALL…TPLF), 55-75 (TVVV…MWMM), 86-106 (ALLL…DDFI), 122-142 (LVLQ…FPNA), 158-178 (IPWL…FVLW), 196-216 (LDGL…LMGI), 239-259 (PLDL…FLWW), 266-286 (IFMG…FAIL), 291-311 (LLLA…IIQV), and 348-368 (ILGG…WVVL).

The protein belongs to the glycosyltransferase 4 family. MraY subfamily. It depends on Mg(2+) as a cofactor.

It is found in the cell membrane. The enzyme catalyses UDP-N-acetyl-alpha-D-muramoyl-L-alanyl-gamma-D-glutamyl-meso-2,6-diaminopimeloyl-D-alanyl-D-alanine + di-trans,octa-cis-undecaprenyl phosphate = di-trans,octa-cis-undecaprenyl diphospho-N-acetyl-alpha-D-muramoyl-L-alanyl-D-glutamyl-meso-2,6-diaminopimeloyl-D-alanyl-D-alanine + UMP. It participates in cell wall biogenesis; peptidoglycan biosynthesis. In terms of biological role, catalyzes the initial step of the lipid cycle reactions in the biosynthesis of the cell wall peptidoglycan: transfers peptidoglycan precursor phospho-MurNAc-pentapeptide from UDP-MurNAc-pentapeptide onto the lipid carrier undecaprenyl phosphate, yielding undecaprenyl-pyrophosphoryl-MurNAc-pentapeptide, known as lipid I. The chain is Phospho-N-acetylmuramoyl-pentapeptide-transferase from Arthrobacter sp. (strain FB24).